The following is a 121-amino-acid chain: Small ribosomal subunit protein uS13 (121 aa).

The interval glycine 94–lysine 121 is disordered. Residues alanine 106–lysine 121 are compositionally biased toward basic residues.

It belongs to the universal ribosomal protein uS13 family. Part of the 30S ribosomal subunit. Forms a loose heterodimer with protein S19. Forms two bridges to the 50S subunit in the 70S ribosome.

Functionally, located at the top of the head of the 30S subunit, it contacts several helices of the 16S rRNA. In the 70S ribosome it contacts the 23S rRNA (bridge B1a) and protein L5 of the 50S subunit (bridge B1b), connecting the 2 subunits; these bridges are implicated in subunit movement. Contacts the tRNAs in the A and P-sites. The polypeptide is Small ribosomal subunit protein uS13 (Geobacillus sp. (strain WCH70)).